Here is a 385-residue protein sequence, read N- to C-terminus: MSELALIQKAIEESQQKMTQLFDAQKAEIESTGQVSKQLQSDLMKVQEELTKSGTRLFDLEQKLASGAENPGEKKSFSERAAEELIKSWDGKQGTFGAKTFNKSLGSDADSAGSLIQPMQIPGIIMPGLRRLTIRDLLAQGRTSSNALEYVREEVFTNNADVVAEKALKPESDITFSKQTANVKTIAHWVQASRQVMDDAPMLQSYINNRLMYGLALKEEGQLLNGDGTGDNLEGLNKVATAYDTSLNATGDTRADIIAHAIYQVTESEFSASGIVLNPRDWHNIALLKDNEGRYIFGGPQAFTSNIMWGLPVVPTKAQAAGTFTVGGFDMASQVWDRMDATVEVSREDRDNFVKNMLTILCEERLALAHYRPTAIIKGTFSSGS.

The stretch at 1–57 (MSELALIQKAIEESQQKMTQLFDAQKAEIESTGQVSKQLQSDLMKVQEELTKSGTRL) forms a coiled coil. Residue lysine 169 forms an Isoaspartyl lysine isopeptide (Lys-Asn) (interchain with N-356) linkage. Residue asparagine 356 forms an Isoaspartyl lysine isopeptide (Asn-Lys) (interchain with K-169) linkage.

It belongs to the HK97 phage major capsid protein family. In terms of assembly, homopentamer and homohexamer; isoaspartyl lysine isopeptide-linked. Interacts with the portal protein. Post-translationally, the scaffolding domain delta is cleaved by the viral protease and lost after assembly. In terms of processing, the major capsid proteins are covalently cross-linked.

It is found in the virion. In terms of biological role, assembles to form an icosahedral capsid of 66 nm, with a T=7 laevo symmetry. Responsible for its self-assembly into a procapsid. The phage does not need to encode a separate scaffolfing protein because its capsid protein contains the delta domain that carries that function. The polypeptide is Major capsid protein (5) (Escherichia coli (Bacteriophage HK97)).